A 103-amino-acid polypeptide reads, in one-letter code: Large ribosomal subunit protein bL21 (103 aa).

Belongs to the bacterial ribosomal protein bL21 family. In terms of assembly, part of the 50S ribosomal subunit. Contacts protein L20.

Functionally, this protein binds to 23S rRNA in the presence of protein L20. The chain is Large ribosomal subunit protein bL21 from Shewanella sp. (strain MR-7).